We begin with the raw amino-acid sequence, 266 residues long: MPLSFTQPCSSGALLLLVVSNLLLWENVACLPLSSNDTDDDPLSIKGLLDHAMILSKNITDLNMELRRIFTISEMSAKLIDKFLSSSSSSDSYDQFMLEFLGQQELLTKNLTYCHKYSIKVPEDIEEAQNVISLEDFPILILSRMQAWNETLKNRINLSEGTPGIDDDILPIYKNIETKIAELLEDSKSILSQAYGATENVADYTLWSGLEDLQSSDEETRFLALCKLSYCLHVDIHTANFYLQFLRCVALVNSDSCLSSKTGNDS.

The signal sequence occupies residues 1 to 30; that stretch reads MPLSFTQPCSSGALLLLVVSNLLLWENVAC. N-linked (GlcNAc...) asparagine glycans are attached at residues asparagine 36, asparagine 58, asparagine 110, asparagine 149, and asparagine 157. 2 disulfide bridges follow: cysteine 114/cysteine 231 and cysteine 248/cysteine 257.

The protein belongs to the somatotropin/prolactin family. In terms of tissue distribution, expressed specifically in the placenta. Detected only in the trophoblast giant cells.

The protein resides in the secreted. This is Prolactin-7A1 (Prl7a1) from Mus musculus (Mouse).